Here is a 456-residue protein sequence, read N- to C-terminus: Protein trichome birefringence-like 25 (456 aa).

A helical; Signal-anchor for type II membrane protein membrane pass occupies residues 26 to 42; it reads QIFLKSVAFFLLIGLAY. Positions 172-174 match the GDS motif motif; sequence GDS. The DCXHWCLPGXXDXWN motif signature appears at 426–440; it reads DCLHWCLPGPIDSWN.

It belongs to the PC-esterase family. TBL subfamily.

The protein resides in the membrane. Its function is as follows. May be involved in the O-acetylation of mannan. May act as a bridging protein that binds pectin and other cell wall polysaccharides. Probably involved in maintaining esterification of pectins. The chain is Protein trichome birefringence-like 25 (TBL25) from Arabidopsis thaliana (Mouse-ear cress).